We begin with the raw amino-acid sequence, 510 residues long: Bifunctional purine biosynthesis protein PurH (510 aa).

In terms of domain architecture, MGS-like spans 1-142 (MRALLSVSDK…KNYKDVMVLC (142 aa)).

It belongs to the PurH family.

The enzyme catalyses (6R)-10-formyltetrahydrofolate + 5-amino-1-(5-phospho-beta-D-ribosyl)imidazole-4-carboxamide = 5-formamido-1-(5-phospho-D-ribosyl)imidazole-4-carboxamide + (6S)-5,6,7,8-tetrahydrofolate. The catalysed reaction is IMP + H2O = 5-formamido-1-(5-phospho-D-ribosyl)imidazole-4-carboxamide. The protein operates within purine metabolism; IMP biosynthesis via de novo pathway; 5-formamido-1-(5-phospho-D-ribosyl)imidazole-4-carboxamide from 5-amino-1-(5-phospho-D-ribosyl)imidazole-4-carboxamide (10-formyl THF route): step 1/1. It participates in purine metabolism; IMP biosynthesis via de novo pathway; IMP from 5-formamido-1-(5-phospho-D-ribosyl)imidazole-4-carboxamide: step 1/1. The sequence is that of Bifunctional purine biosynthesis protein PurH from Campylobacter jejuni (strain RM1221).